The following is a 567-amino-acid chain: Vacuolar fusion protein MON1 homolog (567 aa).

Disordered stretches follow at residues 1-52 (MDMD…DDEG) and 65-129 (TSAS…DDTS). Positions 7–19 (TNNPSPPGPPDSP) are enriched in pro residues. Over residues 43-52 (DDYDDDDDEG) the composition is skewed to acidic residues.

This sequence belongs to the MON1/SAND family. In terms of assembly, interacts with CCZ1A, CCZ1B and RABF2B.

It localises to the endosome. The protein resides in the prevacuolar compartment. In terms of biological role, plays an important role in membrane trafficking through the secretory apparatus. In complex with CCZ1, acts as a guanine exchange factor (GEF) for Rab7 protein family. Promotes the exchange of GDP to GTP, converting it from an inactive GDP-bound form into an active GTP-bound form. The active form is involved in protein trafficking from prevacuolar compartments (PVCs) to vacuoles. May serve as a linker between Rab5 and Rab7 protein families in PVCs and mediate PVC maturation. This chain is Vacuolar fusion protein MON1 homolog, found in Oryza sativa subsp. japonica (Rice).